The following is a 2089-amino-acid chain: MTLPNNVVLFGDQTVDPCPIIKQLYRQSRDSLTLQTLFRQSYDAVRREIATSEASDRALFPSFDSFQDLAEKQNERHNEAVSTVLLCIAQLGLLMIHVDQDDSTFDARPSRTYLVGLCTGMLPAAALAASSSTSQLLRLAPEIVLVALRLGLEANRRSAQIEASTESWASVVPGMAPQEQQEALAQFNDEFMIPTSKQAYISAESDSSATLSGPPSTLLSLFSSSDIFKKARRIKLPITAAFHAPHLRVPDVEKILGSLSHSDEYPLRNDVVIVSTRSGKPITAQSLGDALQHIIMDILREPMRWSRVVEEMINGLKDQGAILTSAGPVRAADSLRQRMASAGIEVSRSTEMQPRQEQRTKPRSSDIAIIGYAARLPESETLEEVWKILEDGRDVHKKIPSDRFDVDTHCDPSGKIKNTSYTPYGCFLDRPGFFDARLFNMSPREASQTDPAQRLLLLTTYEALEMAGYTPDGTPSTAGDRIGTFFGQTLDDYREANASQNIEMYYVSGGIRAFGPGRLNYHFKWEGPSYCVDAACSSSTLSIQMAMSSLRAHECDTAVAGGTNVLTGVDMFSGLSRGSFLSPTGSCKTFDNDADGYCRGDGVGSVILKRLDDAIADGDNIQAVIKSAATNHSAHAVSITHPHAGAQQNLMRQVLREGDVEPADIDYVEMHGTGTQAGDATEFASVTNVITGRTRDNPLHVGAVKANFGHAEAAAGTNSLVKVLMMMRKNAIPPHIGIKGRINEKFPPLDKINVRINRTMTPFVARAGGDGKRRVLLNNFNATGGNTSLLIEDAPKTDIQGHDLRSAHVVAISAKTPYSFRQNTQRLLEYLQLNPETQLQDLSYTTTARRMHHVIRKAYAVQSIEQLVQSLKKDISSSSEPGATTEHSSAVFLFTGQGSQYLGMGRQLYQTNKAFRKSISESDSICIRQGLPSFEWIVSAEPSEERITSPSESQLALVAIALALASLWQSWGITPKAVMGHSLGEYAALCVAGVLSISDTLYLVGKRAQMMEKKCIANTHSMLAIQSDSESIQQIISGGQMPSCEIACLNGPSNTVVSGSLTDIHSLEEKLNAMGTKTTLLKLPFAFHSVQMDPILEDIRALAQNVQFRKPIVPIASTLLGTLVKDHGIITADYLTRQARQAVRFQEALQACRAENIATDDTLWVEVGAHPLCHGMVRSTLGLSPTKALPSLKRDEDCWSTISRSIANAYNSGVKVSWIDYHRDFQGALRLLELPSYAFDLKNYWIQHEGDWSLRKGETTRTTAPPPQASFSTTCLQVIENETFTQDSASVTFSSQLSEPKLNTAVRGHLVSGTGLCPSSVYADVAFTAAWYIASRMTPSDPVPAMDLSSMEVFRPLIVDSNETSQLLRVSATRNPNEQIVNIKISSQDDKGRQEHAHCTVMYGDGHQWMEEWQRNAYLIQSRIDKLTQPSSPGIHRMLKEMIYKQFQTVVTYSPEYHNIDEIFMDCDLNETAANIKLQSTAGHGEFIYSPYWIDTVAHLAGFILNANVKTPADTVFISHGWQSFQIAAPLSAEKTYRGYVRMQPSSGRGVMAGDVYIFDGDEIVVVCKGIKFQQMKRTTLQSLLGVSPAATPTSKSIAAKSTRPQLVTVRKAAVTQSPVAGFSKVLDTIASEVGVDVSELSDDVKISDVGVDSLLTISILGRLRPETGLDLSSSLFIEHPTIAELRAFFLDKMDMPQATANDDDSDDSSDDEGPGFSRSQSNSTISTPEEPDVVNVLMSIIAREVGIQESEIQLSTPFAEIGVDSLLTISILDALKTEIGMNLSANFFHDHPTFADVQKALGAAPTPQKPLDLPLARLEQSPRPSSQALRAKSVLLQGRPEKGKPALFLLPDGAGSLFSYISLPSLPSGLPIYGLDSPFHNNPSEFTISFSDVATIYIAAIRAIQPKGPYMLGGWSLGGIHAYETARQLIEQGETISNLIMIDSPCPGTLPPLPAPTLSLLEKAGIFDGLSTSGAPITERTRLHFLGCVRALENYTVTPLPPGKSPGKVTVIWAQDGVLEGREEQGKEYMAATSSGDLNKDMDKAKEWLTGKRTSFGPSGWDKLTGTEVHCHVVGGNHFSIMFPPKVC.

Residues 8–243 (VLFGDQTVDP…IKLPITAAFH (236 aa)) are N-terminal acylcarrier protein transacylase (SAT) domain (SAT). Residues 342-364 (AGIEVSRSTEMQPRQEQRTKPRS) are disordered. Basic and acidic residues predominate over residues 354–364 (PRQEQRTKPRS). A Ketosynthase family 3 (KS3) domain is found at 364 to 793 (SSDIAIIGYA…GGNTSLLIED (430 aa)). Catalysis depends on for beta-ketoacyl synthase activity residues Cys536, His671, and His710. The segment at 891-1214 (VFLFTGQGSQ…SIANAYNSGV (324 aa)) is malonyl-CoA:ACP transacylase (MAT) domain. Residues 1273–1586 (TTCLQVIENE…KRTTLQSLLG (314 aa)) are product template (PT) domain. The tract at residues 1276-1408 (LQVIENETFT…CTVMYGDGHQ (133 aa)) is N-terminal hotdog fold. Residues 1276-1582 (LQVIENETFT…FQQMKRTTLQ (307 aa)) form the PKS/mFAS DH domain. His1309 serves as the catalytic Proton acceptor; for dehydratase activity. Residues 1435–1582 (IHRMLKEMIY…FQQMKRTTLQ (148 aa)) are C-terminal hotdog fold. Asp1495 serves as the catalytic Proton donor; for dehydratase activity. The Carrier 1 domain maps to 1617–1694 (QSPVAGFSKV…ELRAFFLDKM (78 aa)). Residue Ser1654 is modified to O-(pantetheine 4'-phosphoryl)serine. The interval 1697–1730 (PQATANDDDSDDSSDDEGPGFSRSQSNSTISTPE) is disordered. Residues 1702–1714 (NDDDSDDSSDDEG) are compositionally biased toward acidic residues. The segment covering 1718–1728 (SRSQSNSTIST) has biased composition (polar residues). The 78-residue stretch at 1729 to 1806 (PEEPDVVNVL…DVQKALGAAP (78 aa)) folds into the Carrier 2 domain. O-(pantetheine 4'-phosphoryl)serine is present on Ser1766. Residues 1848 to 2083 (LFLLPDGAGS…VVGGNHFSIM (236 aa)) are thioesterase (TE) domain.

The protein operates within secondary metabolite biosynthesis. Its function is as follows. Non-reducing polyketide synthase; part of the gene cluster that mediates the biosynthesis of orcinol depsidone grayanic acid (GRA), the only major secondary metabolite known in C.grayi. The first step consists in the ring and depside synthesis by PKS16 leading to 4-O-demethylsphaerophorin, involving different orcinol-like rings, one with acetyl CoA and the other with octanoyl CoA as the starter. Further depsidone formation by the GRA cluster-specific cytochrome P450 leads to 4-O-demethylgrayanic acid. Finally, the cluster specific O-methyltransferase probably converts the 4-O-demethylgrayanic acid into grayanic acid. In Cladonia grayi (Gray's cup lichen), this protein is Non-reducing polyketide synthase PKS16.